The following is a 294-amino-acid chain: tRNA-cytidine(32) 2-sulfurtransferase (294 aa).

The PP-loop motif signature appears at Ser-58–Ser-63. [4Fe-4S] cluster-binding residues include Cys-133, Cys-136, and Cys-224.

This sequence belongs to the TtcA family. As to quaternary structure, homodimer. Mg(2+) serves as cofactor. Requires [4Fe-4S] cluster as cofactor.

The protein resides in the cytoplasm. The enzyme catalyses cytidine(32) in tRNA + S-sulfanyl-L-cysteinyl-[cysteine desulfurase] + AH2 + ATP = 2-thiocytidine(32) in tRNA + L-cysteinyl-[cysteine desulfurase] + A + AMP + diphosphate + H(+). It participates in tRNA modification. Catalyzes the ATP-dependent 2-thiolation of cytidine in position 32 of tRNA, to form 2-thiocytidine (s(2)C32). The sulfur atoms are provided by the cysteine/cysteine desulfurase (IscS) system. In Ruegeria pomeroyi (strain ATCC 700808 / DSM 15171 / DSS-3) (Silicibacter pomeroyi), this protein is tRNA-cytidine(32) 2-sulfurtransferase.